A 609-amino-acid chain; its full sequence is Glutamine--fructose-6-phosphate aminotransferase [isomerizing] (609 aa).

Catalysis depends on Cys2, which acts as the Nucleophile; for GATase activity. The Glutamine amidotransferase type-2 domain occupies 2–219 (CGIFGYLGNQ…SGEFAIVSQG (218 aa)). SIS domains are found at residues 285–426 (LSDV…VHGA) and 458–599 (WAQP…IDCP). Catalysis depends on Lys604, which acts as the For Fru-6P isomerization activity.

As to quaternary structure, homodimer.

The protein localises to the cytoplasm. It catalyses the reaction D-fructose 6-phosphate + L-glutamine = D-glucosamine 6-phosphate + L-glutamate. Its function is as follows. Catalyzes the first step in hexosamine metabolism, converting fructose-6P into glucosamine-6P using glutamine as a nitrogen source. The chain is Glutamine--fructose-6-phosphate aminotransferase [isomerizing] from Chlamydia pneumoniae (Chlamydophila pneumoniae).